A 156-amino-acid polypeptide reads, in one-letter code: Protein eva-1 homolog A (156 aa).

Residues 40–60 (ALYFVSGVCIGLFLTLAALVM) traverse the membrane as a helical segment. The segment at 79–100 (DRECSDSSDSEDGSEDTASDLS) is disordered. Residues 84–96 (DSSDSEDGSEDTA) show a composition bias toward acidic residues. T110 is subject to Phosphothreonine. Phosphoserine is present on S118.

It belongs to the EVA1 family.

The protein localises to the endoplasmic reticulum membrane. It localises to the lysosome membrane. Its function is as follows. Acts as a regulator of programmed cell death, mediating both autophagy and apoptosis. This is Protein eva-1 homolog A (Eva1a) from Mus musculus (Mouse).